A 308-amino-acid polypeptide reads, in one-letter code: Sulfate adenylyltransferase subunit 2 (308 aa).

The tract at residues arginine 286–phenylalanine 308 is disordered.

The protein belongs to the PAPS reductase family. CysD subfamily. As to quaternary structure, heterodimer composed of CysD, the smaller subunit, and CysN.

It carries out the reaction sulfate + ATP + H(+) = adenosine 5'-phosphosulfate + diphosphate. It functions in the pathway sulfur metabolism; hydrogen sulfide biosynthesis; sulfite from sulfate: step 1/3. Functionally, with CysN forms the ATP sulfurylase (ATPS) that catalyzes the adenylation of sulfate producing adenosine 5'-phosphosulfate (APS) and diphosphate, the first enzymatic step in sulfur assimilation pathway. APS synthesis involves the formation of a high-energy phosphoric-sulfuric acid anhydride bond driven by GTP hydrolysis by CysN coupled to ATP hydrolysis by CysD. The sequence is that of Sulfate adenylyltransferase subunit 2 from Nocardia farcinica (strain IFM 10152).